Here is a 155-residue protein sequence, read N- to C-terminus: Small ribosomal subunit protein uS7c (155 aa).

It belongs to the universal ribosomal protein uS7 family. In terms of assembly, part of the 30S ribosomal subunit.

It localises to the plastid. The protein localises to the chloroplast. Functionally, one of the primary rRNA binding proteins, it binds directly to 16S rRNA where it nucleates assembly of the head domain of the 30S subunit. The protein is Small ribosomal subunit protein uS7c (rps7) of Houttuynia cordata (Chameleon plant).